Consider the following 252-residue polypeptide: Phosphomannomutase (252 aa).

Asp-13 functions as the Nucleophile in the catalytic mechanism. Residues Asp-13 and Asp-15 each contribute to the Mg(2+) site. Asp-15 serves as the catalytic Proton donor/acceptor. 6 residues coordinate alpha-D-mannose 1-phosphate: Arg-22, Arg-124, Arg-135, Arg-142, Ser-180, and Asp-182. Mg(2+)-binding residues include Asp-208, Tyr-220, and Thr-225.

It belongs to the eukaryotic PMM family. In terms of assembly, homodimer. Requires Mg(2+) as cofactor. Expressed in roots, leaves, stems and flowers.

It localises to the cytoplasm. The enzyme catalyses alpha-D-mannose 1-phosphate = D-mannose 6-phosphate. It participates in nucleotide-sugar biosynthesis; GDP-alpha-D-mannose biosynthesis; alpha-D-mannose 1-phosphate from D-fructose 6-phosphate: step 2/2. Catalyzes the interconversion of mannose-6-phosphate to mannose-1-phosphate, the precursor for the synthesis of GDP-mannose. GDP-mannose is an essential sugar nucleotide for the synthesis of D-mannose-containing cell wall polysaccharides (galactomannans and glucomannans), glycolipids, glycoproteins and the antioxidant L-ascorbate. Involved in the biosynthesis of ascorbate and polysaccharides in response to abiotic stress during seed germination. This chain is Phosphomannomutase, found in Dendrobium officinale (Orchid).